The sequence spans 552 residues: Hydroxylamine reductase (552 aa).

C3, C6, C18, and C25 together coordinate [2Fe-2S] cluster. Hybrid [4Fe-2O-2S] cluster is bound by residues H250, E274, C318, C406, C434, C459, E493, and K495. Residue C406 is modified to Cysteine persulfide.

It belongs to the HCP family. Requires [2Fe-2S] cluster as cofactor. The cofactor is hybrid [4Fe-2O-2S] cluster.

It is found in the cytoplasm. The enzyme catalyses A + NH4(+) + H2O = hydroxylamine + AH2 + H(+). Functionally, catalyzes the reduction of hydroxylamine to form NH(3) and H(2)O. The protein is Hydroxylamine reductase of Shewanella woodyi (strain ATCC 51908 / MS32).